The chain runs to 225 residues: NAD(P)H-quinone oxidoreductase subunit K, chloroplastic (225 aa).

[4Fe-4S] cluster is bound by residues Cys43, Cys44, Cys108, and Cys139.

This sequence belongs to the complex I 20 kDa subunit family. In terms of assembly, NDH is composed of at least 16 different subunits, 5 of which are encoded in the nucleus. The cofactor is [4Fe-4S] cluster.

The protein localises to the plastid. It localises to the chloroplast thylakoid membrane. The enzyme catalyses a plastoquinone + NADH + (n+1) H(+)(in) = a plastoquinol + NAD(+) + n H(+)(out). It catalyses the reaction a plastoquinone + NADPH + (n+1) H(+)(in) = a plastoquinol + NADP(+) + n H(+)(out). Functionally, NDH shuttles electrons from NAD(P)H:plastoquinone, via FMN and iron-sulfur (Fe-S) centers, to quinones in the photosynthetic chain and possibly in a chloroplast respiratory chain. The immediate electron acceptor for the enzyme in this species is believed to be plastoquinone. Couples the redox reaction to proton translocation, and thus conserves the redox energy in a proton gradient. The sequence is that of NAD(P)H-quinone oxidoreductase subunit K, chloroplastic from Brachypodium distachyon (Purple false brome).